A 184-amino-acid polypeptide reads, in one-letter code: Photosystem I assembly protein Ycf4 (184 aa).

Transmembrane regions (helical) follow at residues 22 to 42 (FCWA…GISS) and 57 to 77 (IIFF…LFIS).

It belongs to the Ycf4 family.

The protein resides in the plastid. The protein localises to the chloroplast thylakoid membrane. Functionally, seems to be required for the assembly of the photosystem I complex. This is Photosystem I assembly protein Ycf4 from Populus alba (White poplar).